The sequence spans 497 residues: Cysteine--tRNA ligase (497 aa).

Zn(2+) is bound at residue C46. Positions 48–58 match the 'HIGH' region motif; sequence PTVYSDAHLGH. The Zn(2+) site is built by C237, H262, and E266. Residues 293–297 carry the 'KMSKS' region motif; that stretch reads KMSKS. Residue K296 coordinates ATP.

The protein belongs to the class-I aminoacyl-tRNA synthetase family. As to quaternary structure, monomer. The cofactor is Zn(2+).

Its subcellular location is the cytoplasm. It catalyses the reaction tRNA(Cys) + L-cysteine + ATP = L-cysteinyl-tRNA(Cys) + AMP + diphosphate. This is Cysteine--tRNA ligase from Deinococcus geothermalis (strain DSM 11300 / CIP 105573 / AG-3a).